We begin with the raw amino-acid sequence, 461 residues long: Glycine--tRNA ligase (461 aa).

Substrate contacts are provided by Arg-100 and Glu-163. ATP-binding positions include 195-197 (RNE), 205-210 (FRTREF), 282-283 (EL), and 326-329 (GLGR). Residue 210 to 214 (FEQME) coordinates substrate. Substrate is bound at residue 322 to 326 (EPAAG).

The protein belongs to the class-II aminoacyl-tRNA synthetase family. As to quaternary structure, homodimer.

It is found in the cytoplasm. The catalysed reaction is tRNA(Gly) + glycine + ATP = glycyl-tRNA(Gly) + AMP + diphosphate. Its function is as follows. Catalyzes the attachment of glycine to tRNA(Gly). The protein is Glycine--tRNA ligase of Corynebacterium efficiens (strain DSM 44549 / YS-314 / AJ 12310 / JCM 11189 / NBRC 100395).